Here is a 245-residue protein sequence, read N- to C-terminus: NAD-dependent protein deacetylase (245 aa).

Residues methionine 1 to isoleucine 245 enclose the Deacetylase sirtuin-type domain. Residues alanine 26, threonine 30, phenylalanine 37, arginine 38, glutamine 107, isoleucine 109, aspartate 110, and histidine 125 each contribute to the NAD(+) site. Phenylalanine 37 is a binding site for nicotinamide. Nicotinamide contacts are provided by isoleucine 109 and aspartate 110. Histidine 125 acts as the Proton acceptor in catalysis. Zn(2+) contacts are provided by cysteine 133, cysteine 136, cysteine 155, and cysteine 158. 4 residues coordinate NAD(+): threonine 196, serine 197, asparagine 219, and isoleucine 237.

The protein belongs to the sirtuin family. Class U subfamily. Zn(2+) serves as cofactor.

Its subcellular location is the cytoplasm. The enzyme catalyses N(6)-acetyl-L-lysyl-[protein] + NAD(+) + H2O = 2''-O-acetyl-ADP-D-ribose + nicotinamide + L-lysyl-[protein]. NAD-dependent protein deacetylase which modulates the activities of several enzymes which are inactive in their acetylated form. This is NAD-dependent protein deacetylase from Clostridium acetobutylicum (strain ATCC 824 / DSM 792 / JCM 1419 / IAM 19013 / LMG 5710 / NBRC 13948 / NRRL B-527 / VKM B-1787 / 2291 / W).